The chain runs to 579 residues: Nif-specific regulatory protein (579 aa).

The GAF domain occupies 40–187 (DPVAEVPQIF…MVASLLEQAL (148 aa)). The 229-residue stretch at 226 to 454 (IVGSSPAIAE…LENCVNRAAA (229 aa)) folds into the Sigma-54 factor interaction domain. Residues 254 to 261 (GESGTGKE) and 317 to 326 (ADGGTLFLDE) contribute to the ATP site. Positions 464 to 536 (EELACRQGAC…PLRTKTAQLS (73 aa)) are inter-domain linker. The a divalent metal cation site is built by cysteine 468 and cysteine 473. Residues 502–529 (RVSAPPPEPAPAPEPAPEAPPREEVPLR) are disordered. 7 repeat units span residues 505–506 (AP), 507–508 (PP), 509–510 (EP), 511–512 (AP), 513–514 (AP), 515–516 (EP), and 517–518 (AP). The interval 505 to 518 (APPPEPAPAPEPAP) is 7 X 2 AA tandem repeats of X-P. Pro residues predominate over residues 505–520 (APPPEPAPAPEPAPEA). Positions 537 to 579 (REELLRALESAGWVQAKAARLLGMTPRQIAYALQKFEIELRKI) are C-terminal DNA-binding domain. Positions 551 to 570 (QAKAARLLGMTPRQIAYALQ) form a DNA-binding region, H-T-H motif.

Interacts with sigma-54.

Functionally, required for activation of most nif operons, which are directly involved in nitrogen fixation. This is Nif-specific regulatory protein (nifA1) from Rhodobacter capsulatus (Rhodopseudomonas capsulata).